Here is a 306-residue protein sequence, read N- to C-terminus: MNDYNHYFHFPREEWRKLEVSKDQILTAEELEEIRGLNDRISLQDISEIYLPLIKLIAIQYHEAIFIHGEKMEYLKKKESRAPFIIALAGSVAVGKSTTARVFKLMLDRWFSKTRQVELVTTDGFLYPNKVLEERGIMDKKGFPESYDRDRFAKFLTDLKANKEDVEIPLYSHFTYDVLDETRVIHNPDIVIIEGINVLQADQHESLFPSDFFDFSVYMDANEADIKKWYLERFFMLRETAFQDESSYFHPYTKISKQEAETFALGVWDTINGVNLKENIEKTKYRADLVLQKGTDHLISDIYLRK.

90 to 97 (GSVAVGKS) contacts ATP.

Belongs to the prokaryotic pantothenate kinase family.

It is found in the cytoplasm. The enzyme catalyses (R)-pantothenate + ATP = (R)-4'-phosphopantothenate + ADP + H(+). Its pathway is cofactor biosynthesis; coenzyme A biosynthesis; CoA from (R)-pantothenate: step 1/5. The chain is Pantothenate kinase from Listeria monocytogenes serotype 4b (strain CLIP80459).